A 792-amino-acid chain; its full sequence is DEAD-box ATP-dependent RNA helicase 40 (792 aa).

Residues 1–16 (MSAGTAPAAPRYAPDD) are compositionally biased toward low complexity. 2 disordered regions span residues 1-25 (MSAG…PWRG) and 44-118 (TQYE…PLPA). The WW domain maps to 17–51 (PSLPKPWRGLVDGTTGYLYYWNPETNITQYEKPLP). Residues 52–68 (PEDQLPPPPPLPPPPPR) show a composition bias toward pro residues. Composition is skewed to basic and acidic residues over residues 70–80 (GRGDRDRDRRD) and 88–108 (PRRD…DHRS). A Q motif motif is present at residues 150 to 178 (TSFETGGFPPEILKEIQRAGFSSPTPIQA). A Helicase ATP-binding domain is found at 181-355 (WPIALQCQDV…EDLLVHPVQV (175 aa)). An ATP-binding site is contributed by 194-201 (AKTGSGKT). The DEAD box motif lies at 303–306 (DEAD). Positions 384 to 528 (RLEQILRSQD…RVPRDLADMA (145 aa)) constitute a Helicase C-terminal domain. Positions 523-792 (DLADMASRGG…NATVQNGGDN (270 aa)) are disordered. Basic and acidic residues-rich tracts occupy residues 543–560 (TRSD…RYGG) and 572–588 (DSSR…DGRS). Composition is skewed to basic residues over residues 589 to 599 (RRSGRGRSRSR) and 609 to 654 (RSPK…RRHE). Positions 668 to 708 (GHGERKRTPEADPSRNHTNHSDPKDDRHPEDGKVGKVDLDR) are enriched in basic and acidic residues. The segment covering 725–739 (GKTSRSVSPGNQVEG) has biased composition (polar residues). A compositionally biased stretch (acidic residues) spans 764-777 (DEEEGMIDEDGEIA).

This sequence belongs to the DEAD box helicase family. DDX5/DBP2 subfamily.

It is found in the nucleus. The catalysed reaction is ATP + H2O = ADP + phosphate + H(+). Functionally, ATP-dependent RNA helicase involved nonsense-mediated mRNA decay and ribosome biogenesis through rRNA processing. In Oryza sativa subsp. japonica (Rice), this protein is DEAD-box ATP-dependent RNA helicase 40.